The following is a 149-amino-acid chain: 3-dehydroquinate dehydratase (149 aa).

Tyrosine 24 acts as the Proton acceptor in catalysis. Substrate contacts are provided by asparagine 75, histidine 81, and aspartate 88. Histidine 101 serves as the catalytic Proton donor. Residues 102–103 (IS) and arginine 112 contribute to the substrate site.

It belongs to the type-II 3-dehydroquinase family. Homododecamer.

It catalyses the reaction 3-dehydroquinate = 3-dehydroshikimate + H2O. It participates in metabolic intermediate biosynthesis; chorismate biosynthesis; chorismate from D-erythrose 4-phosphate and phosphoenolpyruvate: step 3/7. Catalyzes a trans-dehydration via an enolate intermediate. The polypeptide is 3-dehydroquinate dehydratase (Methylobacterium radiotolerans (strain ATCC 27329 / DSM 1819 / JCM 2831 / NBRC 15690 / NCIMB 10815 / 0-1)).